Here is an 813-residue protein sequence, read N- to C-terminus: Sorting nexin-29 (813 aa).

In terms of domain architecture, RUN spans 36-180 (SDSDSRVTCL…ILFAINIDNK (145 aa)). Phosphoserine occurs at positions 268, 291, 292, 330, and 344. The tract at residues 269-299 (FDDEEDEQNSGDVFKKTPGAGESSEDNSDRS) is disordered. A compositionally biased stretch (acidic residues) spans 346–357 (DDEDVDENEDDV). Positions 346–378 (DDEDVDENEDDVYGNSSGRKHRGHSESPEKPLE) are disordered. Residues serine 445 and serine 450 each carry the phosphoserine modification. Residues 466-545 (TISELRQATV…VLKVQLKKYV (80 aa)) are a coiled coil. Serine 639 is modified (phosphoserine). Threonine 641 bears the Phosphothreonine mark. Phosphoserine is present on residues serine 642 and serine 646. The 124-residue stretch at 656 to 779 (ALINVWIPSV…PFFVDITPPG (124 aa)) folds into the PX domain. Residues 778–813 (PGEPVNSRPKAASRFPKLSRGQPRETRNVEPQSGDL) form a disordered region.

Belongs to the sorting nexin family.

The sequence is that of Sorting nexin-29 (SNX29) from Homo sapiens (Human).